Reading from the N-terminus, the 378-residue chain is 1-acyl-sn-glycerol-3-phosphate acyltransferase delta (378 aa).

The chain crosses the membrane as a helical span at residues 11 to 31 (FLCHLVFCYVFIASGLIVNAI). The HXXXXD motif motif lies at 96 to 101 (HKFEID). The next 3 helical transmembrane spans lie at 125-145 (ELAY…IFCT), 311-331 (WLFW…SMVS), and 338-358 (LASL…MIGV).

This sequence belongs to the 1-acyl-sn-glycerol-3-phosphate acyltransferase family.

Its subcellular location is the endoplasmic reticulum membrane. The catalysed reaction is a 1-acyl-sn-glycero-3-phosphate + an acyl-CoA = a 1,2-diacyl-sn-glycero-3-phosphate + CoA. It catalyses the reaction (4Z,7Z,10Z,13Z,16Z,19Z)-docosahexaenoyl-CoA + 1-hexadecanoyl-sn-glycero-3-phosphate = 1-hexadecanoyl-2-(4Z,7Z,10Z,13Z,16Z,19Z-docosahexaenoyl)-sn-glycero-3-phosphate + CoA. The enzyme catalyses 1-octadecanoyl-sn-glycero-3-phosphate + (9Z,12Z)-octadecadienoyl-CoA = 1-octadecanoyl-2-(9Z,12Z-octadecadienoyl)-sn-glycero-3-phosphate + CoA. It carries out the reaction 1-octadecanoyl-sn-glycero-3-phosphate + (4Z,7Z,10Z,13Z,16Z,19Z)-docosahexaenoyl-CoA = 1-octadecanoyl-2-(4Z,7Z,10Z,13Z,16Z,19Z-docosahexaenoyl)-sn-glycero-3-phosphate + CoA. The catalysed reaction is (4Z,7Z,10Z,13Z,16Z,19Z)-docosahexaenoyl-CoA + 1-(9Z-octadecenoyl)-sn-glycero-3-phosphate = 1-(9Z-octadecenoyl)-2-(4Z,7Z,10Z,13Z,16Z,19Z-docosahexaenoyl)-sn-glycero-3-phosphate + CoA. It participates in phospholipid metabolism; CDP-diacylglycerol biosynthesis; CDP-diacylglycerol from sn-glycerol 3-phosphate: step 2/3. Converts 1-acyl-sn-glycerol-3-phosphate (lysophosphatidic acid or LPA) into 1,2-diacyl-sn-glycerol-3-phosphate (phosphatidic acid or PA) by incorporating an acyl moiety at the sn-2 position of the glycerol backbone. Exhibits high acyl-CoA specificity for polyunsaturated fatty acyl-CoA, especially docosahexaenoyl-CoA (22:6-CoA, DHA-CoA). In Rattus norvegicus (Rat), this protein is 1-acyl-sn-glycerol-3-phosphate acyltransferase delta (Agpat4).